The sequence spans 473 residues: 3-oxoacyl-[acyl-carrier-protein] synthase I, chloroplastic (473 aa).

Residues Met-1 to Arg-10 are compositionally biased toward polar residues. A disordered region spans residues Met-1–His-26. The transit peptide at Met-1–Ser-46 directs the protein to the chloroplast. Positions Lys-60–Ala-470 constitute a Ketosynthase family 3 (KS3) domain. Residues Cys-224, His-364, and His-400 each act as for beta-ketoacyl synthase activity in the active site.

The protein belongs to the thiolase-like superfamily. Beta-ketoacyl-ACP synthases family. As to quaternary structure, homodimer.

It localises to the plastid. The protein localises to the chloroplast stroma. It carries out the reaction a fatty acyl-[ACP] + malonyl-[ACP] + H(+) = a 3-oxoacyl-[ACP] + holo-[ACP] + CO2. Functionally, catalyzes the condensation reaction of fatty acid synthesis by the addition to an acyl acceptor of two carbons from malonyl-ACP. Specific for elongation from C-10 to unsaturated C-16 and C-18 fatty acids. The chain is 3-oxoacyl-[acyl-carrier-protein] synthase I, chloroplastic (KAS1) from Arabidopsis thaliana (Mouse-ear cress).